We begin with the raw amino-acid sequence, 1689 residues long: Cullin-7 (1689 aa).

One can recognise a CPH domain in the interval 349–422; the sequence is RASFASFNTY…HWHMLEILGF (74 aa). Residues 793 to 972 enclose the DOC domain; the sequence is PIQIPFFDVF…HTRLFYMVRA (180 aa). The segment covering 1321–1337 has biased composition (basic and acidic residues); sequence VAHEDSGREDKSKKEEA. Positions 1321-1371 are disordered; it reads VAHEDSGREDKSKKEEAIGEAAAVAMAEEEDQGKKEEGEEEGEGEDEEEER. A compositionally biased stretch (acidic residues) spans 1358-1370; it reads GEEEGEGEDEEEE. Residue K1567 forms a Glycyl lysine isopeptide (Lys-Gly) (interchain with G-Cter in NEDD8) linkage.

It belongs to the cullin family. In terms of assembly, component of the 3M complex, composed of core components CUL7, CCDC8 and OBSL1. Component of the Cul7-RING(FBXW8) complex consisting of CUL7, RBX1, SKP1 and FBXW8. Within the Cul7-RING(FBXW8) complex interacts with FBXW8 and RBX1, but not with SKP1. Interacts with CUL1 (via the C-terminal domain); the interaction seems to be mediated by FBXW8; it is likely specific to FBXW8, but not other F-box proteins. Interacts (via the CPH domain) with p53/TP53; the interaction preferentially involves tetrameric and dimeric p53/TP53; this interaction recruits p53/TP53 for ubiquitination by neddylated CUL1-RBX1. The CUL7-CUL9 heterodimer seems to interact specifically with p53/TP53. Interacts with FBXW8; interaction is mutually exclusive of binding to CUL9 or p53/TP53. Interacts with CUL9; leading to inhibited CUL9 activity. Interacts with OBSL1. Interacts (as part of the 3M complex) with HDAC4 and HDAC5; it is negatively regulated by ANKRA2.

The protein resides in the cytoplasm. The protein localises to the cytoskeleton. It localises to the microtubule organizing center. It is found in the centrosome. Its subcellular location is the perinuclear region. The protein resides in the golgi apparatus. Its pathway is protein modification; protein ubiquitination. Functionally, core component of the 3M and Cul7-RING(FBXW8) complexes, which mediate the ubiquitination and subsequent proteasomal degradation of target proteins. Core component of the 3M complex, a complex required to regulate microtubule dynamics and genome integrity. It is unclear how the 3M complex regulates microtubules, it could act by controlling the level of a microtubule stabilizer. The Cul7-RING(FBXW8) complex alone lacks ubiquitination activity and does not promote polyubiquitination and proteasomal degradation of p53/TP53. However it mediates recruitment of p53/TP53 for ubiquitination by neddylated CUL1-RBX1. Interaction with CUL9 is required to inhibit CUL9 activity and ubiquitination of BIRC5. The Cul7-RING(FBXW8) complex also mediates ubiquitination and consequent degradation of target proteins such as GORASP1, IRS1 and MAP4K1/HPK1. Ubiquitination of GORASP1 regulates Golgi morphogenesis and dendrite patterning in brain. Mediates ubiquitination and degradation of IRS1 in a mTOR-dependent manner: the Cul7-RING(FBXW8) complex recognizes and binds IRS1 previously phosphorylated by S6 kinase (RPS6KB1 or RPS6KB2). The Cul7-RING(FBXW8) complex also mediates ubiquitination of MAP4K1/HPK1: recognizes and binds autophosphorylated MAP4K1/HPK1, leading to its degradation, thereby affecting cell proliferation and differentiation. Acts as a regulator in trophoblast cell epithelial-mesenchymal transition and placental development. While the Cul7-RING(FBXW8) and the 3M complexes are associated and involved in common processes, CUL7 and the Cul7-RING(FBXW8) complex may have additional functions. Probably plays a role in the degradation of proteins involved in endothelial proliferation and/or differentiation. This Mus musculus (Mouse) protein is Cullin-7 (Cul7).